Reading from the N-terminus, the 105-residue chain is Large ribosomal subunit protein uL24 (105 aa).

Belongs to the universal ribosomal protein uL24 family. Part of the 50S ribosomal subunit.

One of two assembly initiator proteins, it binds directly to the 5'-end of the 23S rRNA, where it nucleates assembly of the 50S subunit. Its function is as follows. One of the proteins that surrounds the polypeptide exit tunnel on the outside of the subunit. This chain is Large ribosomal subunit protein uL24, found in Lachnoclostridium phytofermentans (strain ATCC 700394 / DSM 18823 / ISDg) (Clostridium phytofermentans).